Reading from the N-terminus, the 652-residue chain is Interferon-induced GTP-binding protein Mx1 (652 aa).

Residues 1 to 27 are disordered; that stretch reads MKERTSACRHGTPQKHPDTSEESQAME. Residues 58–331 enclose the Dynamin-type G domain; that stretch reads DLALPAIAVI…LTSHICKSLP (274 aa). The interval 68–75 is G1 motif; that stretch reads GDQSSGKS. Residue 68 to 75 coordinates GTP; the sequence is GDQSSGKS. Residues 93 to 95 are G2 motif; that stretch reads VTR. Residues 169–172 are G3 motif; that stretch reads DLPG. GTP is bound by residues 169-173 and 238-241; these read DLPGI and TKPD. The G4 motif stretch occupies residues 238–241; it reads TKPD. A G5 motif region spans residues 270–273; the sequence is KCRG. Residues 332 to 357 are bundle signaling element (BSE); the sequence is ILENQINVNHQIASEELQKYGADIPE. Residues 357-526 are middle domain; that stretch reads EDDSKRLSFL…HFQMEHIVYC (170 aa). The interval 358 to 622 is stalk; that stretch reads DDSKRLSFLM…TSKCNWFLTE (265 aa). Residues 564-652 form the GED domain; sequence TTEMTQHLNA…AQRKLAKFSN (89 aa).

This sequence belongs to the TRAFAC class dynamin-like GTPase superfamily. Dynamin/Fzo/YdjA family. Homooligomer. Oligomerizes into multimeric filamentous or ring-like structures by virtue of its stalk domain. Oligomerization is critical for GTPase activity, protein stability, and recognition of viral target structures. Interacts with TRPC1, TRPC3, TRPC4, TRPC5, TRPC6 and TRPC7. Interacts with HSPA5. Interacts with TUBB/TUBB5. Interacts with DDX39A and DDX39B. Post-translationally, ISGylated.

It localises to the nucleus. It is found in the cytoplasm. Its subcellular location is the endoplasmic reticulum membrane. The protein localises to the perinuclear region. Functionally, interferon-induced dynamin-like GTPase which has antiviral activity against influenza A virus, (IAV) and Thogoto virus (THOV). Inhibits IAV by interfering with the process of primary transcription, probably by affecting the viral polymerase function. This Rattus norvegicus (Rat) protein is Interferon-induced GTP-binding protein Mx1 (Mx1).